We begin with the raw amino-acid sequence, 149 residues long: Glucosamine 6-phosphate N-acetyltransferase (149 aa).

One can recognise an N-acetyltransferase domain in the interval 7 to 149 (YTFRKLKLTD…DGGVEMVCRF (143 aa)). Substrate-binding positions include Thr-29, 76–79 (KLIH), and 88–90 (EDI). Acetyl-CoA-binding positions include 90–92 (ISV) and 98–103 (GKKLGY). Substrate-binding positions include 119 to 120 (YK) and Asp-124. 133–135 (YEK) contacts acetyl-CoA. Arg-148 contributes to the substrate binding site.

The protein belongs to the acetyltransferase family. GNA1 subfamily.

The enzyme catalyses D-glucosamine 6-phosphate + acetyl-CoA = N-acetyl-D-glucosamine 6-phosphate + CoA + H(+). It participates in nucleotide-sugar biosynthesis; UDP-N-acetyl-alpha-D-glucosamine biosynthesis; N-acetyl-alpha-D-glucosamine 1-phosphate from alpha-D-glucosamine 6-phosphate (route I): step 1/2. In Candida albicans (Yeast), this protein is Glucosamine 6-phosphate N-acetyltransferase (GNA1).